Reading from the N-terminus, the 478-residue chain is MSSFLVSSNNLPEREIPGDYGFPIISAIKDRYDYFYKQGEDVWFHSKAEKYNSTVVKINMAPGPFTSNDYKLVAFLDANSFVYMFDNSLIDKTDTLGGTFKPGKEYYGGYRPVAFVDTSDPNHAALKNYILTSFAKRHNLFIPLFRNSVSDHLFQNLEKQVSDQGKSDFNALLPNMTFGFIFRLLCDQTNPSDTVLGAQGPEHLRKWLFPQLIPSLSARKLPSFIEDLLFHNFLIPFGLVKSDYNKLVDAFSKNAGSMLDEAEKLGIKREEAVHNILFLVGINMFAGLNAFFPHLIRFVGEAGPTLHARLAKEIRTAIKEEGGAVTLSAINKMSLVESIVYETLRLRPPVPLQYGKAKKDFMVQSHDASYMIKKGQFLVGYQPMASRDPKIFDKPDDFIPDRFMGEGVKMLKHVLWSNGRETENPAPDNKQCAGKDLVHLLGRLMLVEFFLRYDTFTVEITPLFRAPNVAIKTLTKAT.

Cysteine 432 lines the heme pocket.

This sequence belongs to the cytochrome P450 family. 9-divinyl ether synthase subfamily. As to expression, not detected in leaves, stems or roots of healthy plants.

The protein resides in the cytoplasm. It localises to the cytosol. It catalyses the reaction (9S)-hydroperoxy-(10E,12Z)-octadecadienoate = colneleate + H2O. The enzyme catalyses (9S)-hydroperoxy-(10E,12Z,15Z)-octadecatrienoate = colnelenate + H2O. In terms of biological role, strictly inducible cytochrome P450 involved in the biosynthesis of the anti-fungal toxins colneleate and colnelenate. Can use (9S)-hydroperoxy-(10E,12Z)-octadecadienoate (9-HPOD) and (9S)-hydroperoxy-(10E,12Z,15Z)-octadecatrienoate (9-HPOT) as substrates, but has a very low activity with the corresponding 13-hydroperoxides (13-HPOD and 13-POT). This chain is Divinyl ether synthase CYP74D3, found in Nicotiana tabacum (Common tobacco).